We begin with the raw amino-acid sequence, 138 residues long: Small ribosomal subunit protein uS11c (138 aa).

Residues 1–22 (MTKPIPRIGSRRNGRIGSRKNA) form a disordered region. The span at 9–22 (GSRRNGRIGSRKNA) shows a compositional bias: basic residues.

It belongs to the universal ribosomal protein uS11 family. In terms of assembly, part of the 30S ribosomal subunit.

It localises to the plastid. It is found in the chloroplast. In Dioscorea elephantipes (Elephant's foot yam), this protein is Small ribosomal subunit protein uS11c.